The chain runs to 437 residues: Trigger factor (437 aa).

Positions 161–246 (DDQVNIDFVG…VNSVSAPVLP (86 aa)) constitute a PPIase FKBP-type domain.

The protein belongs to the FKBP-type PPIase family. Tig subfamily.

Its subcellular location is the cytoplasm. It catalyses the reaction [protein]-peptidylproline (omega=180) = [protein]-peptidylproline (omega=0). Involved in protein export. Acts as a chaperone by maintaining the newly synthesized protein in an open conformation. Functions as a peptidyl-prolyl cis-trans isomerase. This chain is Trigger factor, found in Pseudomonas putida (strain GB-1).